The chain runs to 371 residues: 3-isopropylmalate dehydrogenase (371 aa).

T55 is modified (phosphothreonine). Residue G78–E89 coordinates NAD(+). The substrate site is built by R96, R106, R135, and D224. Mg(2+) is bound by residues D224, D249, and D253. G290 to N302 is an NAD(+) binding site.

It belongs to the isocitrate and isopropylmalate dehydrogenases family. Homodimer. The cofactor is Mg(2+). Requires Mn(2+) as cofactor.

It localises to the cytoplasm. The enzyme catalyses (2R,3S)-3-isopropylmalate + NAD(+) = 4-methyl-2-oxopentanoate + CO2 + NADH. It functions in the pathway amino-acid biosynthesis; L-leucine biosynthesis; L-leucine from 3-methyl-2-oxobutanoate: step 3/4. Its function is as follows. Catalyzes the oxidation of 3-carboxy-2-hydroxy-4-methylpentanoate (3-isopropylmalate) to 3-carboxy-4-methyl-2-oxopentanoate. The product decarboxylates to 4-methyl-2 oxopentanoate. The sequence is that of 3-isopropylmalate dehydrogenase (leu1) from Schizosaccharomyces pombe (strain 972 / ATCC 24843) (Fission yeast).